A 63-amino-acid polypeptide reads, in one-letter code: 2-hydroxymuconate tautomerase (63 aa).

The Proton acceptor; via imino nitrogen role is filled by proline 2.

Belongs to the 4-oxalocrotonate tautomerase family. As to quaternary structure, homohexamer.

The catalysed reaction is (2Z,4E)-2-hydroxyhexa-2,4-dienedioate = (3E)-2-oxohex-3-enedioate. It participates in aromatic compound metabolism; salicylate degradation. In terms of biological role, catalyzes the ketonization of 2-hydroxymuconate stereoselectively to yield 2-oxo-3-hexenedioate. In Stutzerimonas stutzeri (Pseudomonas stutzeri), this protein is 2-hydroxymuconate tautomerase (nahJ).